Consider the following 137-residue polypeptide: Large-conductance mechanosensitive channel (137 aa).

The next 2 membrane-spanning stretches (helical) occupy residues 10–30 (FAMR…AAFG) and 76–96 (GAFI…FMAI).

Belongs to the MscL family. As to quaternary structure, homopentamer.

The protein localises to the cell inner membrane. In terms of biological role, channel that opens in response to stretch forces in the membrane lipid bilayer. May participate in the regulation of osmotic pressure changes within the cell. The sequence is that of Large-conductance mechanosensitive channel from Pectobacterium carotovorum subsp. carotovorum (strain PC1).